Reading from the N-terminus, the 109-residue chain is Non-structural protein ORF4a (109 aa).

In terms of assembly, interacts with host PRKRA/PACT.

It is found in the host cytoplasm. Functionally, dsRNA-binding protein that plays a role in the inhibition of host innate response. Suppresses host PACT-induced activation of RIGI and MDA5 and thereby circumvents the production of type I interferons. Also prevents the activation of host NF-kappa-B. Inhibits the integrated stress response (ISR) in the infected cell by binding to dsRNA and inhibiting EIF2AK2-mediated phosphorylation of EIF2S1/eIF2-alpha. Stress granule formation is thus inhibited, which allows protein synthesis and viral replication. The polypeptide is Non-structural protein ORF4a (ORF4a) (Middle East respiratory syndrome-related coronavirus (isolate United Kingdom/H123990006/2012) (MERS-CoV)).